Consider the following 326-residue polypeptide: Cytosolic Fe-S cluster assembly factor NBP35 (326 aa).

The interval 1 to 38 (MTEIANGQQILPPDYTLKEPEPEHCPGPESENAGKGDS) is disordered. Positions 16 to 26 (TLKEPEPEHCP) are enriched in basic and acidic residues. [4Fe-4S] cluster contacts are provided by C25, C39, C42, and C48. An ATP-binding site is contributed by 78–85 (GKGGVGKS). Residues C251 and C254 each coordinate [4Fe-4S] cluster.

Belongs to the Mrp/NBP35 ATP-binding proteins family. NUBP1/NBP35 subfamily. In terms of assembly, heterotetramer of 2 NBP35 and 2 CFD1 chains. Requires [4Fe-4S] cluster as cofactor.

Its subcellular location is the cytoplasm. It is found in the nucleus. Component of the cytosolic iron-sulfur (Fe/S) protein assembly (CIA) machinery. Required for maturation of extramitochondrial Fe-S proteins. The NBP35-CFD1 heterotetramer forms a Fe-S scaffold complex, mediating the de novo assembly of an Fe-S cluster and its transfer to target apoproteins. Required for biogenesis and export of both ribosomal subunits, which may reflect a role in assembly of the Fe/S clusters in RLI1, a protein which performs rRNA processing and ribosome export. In Kluyveromyces lactis (strain ATCC 8585 / CBS 2359 / DSM 70799 / NBRC 1267 / NRRL Y-1140 / WM37) (Yeast), this protein is Cytosolic Fe-S cluster assembly factor NBP35.